We begin with the raw amino-acid sequence, 805 residues long: Replication restart protein PriA (805 aa).

Residues 1–110 form a 3'BD region; the sequence is MNFAEVIVDV…QAMLPAALKA (110 aa). Positions 111 to 166 are linker; sequence KYEKELKIAHGADLPPQVERLFSETKTLLYSDIPDHETLKLIQRHVQKGDIDVTYK. Residues 167–253 form a WH region; the sequence is VAQKTNKKMV…KESYEEVYRD (87 aa). The region spanning 282–448 is the Helicase ATP-binding domain; that stretch reads TLDSDEHKVF…QKGVYELLSL (167 aa). An ATP-binding site is contributed by 295–302; that stretch reads GVTGSGKT. The DEAH box signature appears at 391–394; that stretch reads DEEH. 8 residues coordinate Zn(2+): Cys510, Cys513, Cys519, Cys522, Cys537, Cys540, Cys550, and Cys553. One can recognise a Helicase C-terminal domain in the interval 545–699; sequence PVPHTCPECA…TFYQHEMAHR (155 aa).

The protein belongs to the helicase family. PriA subfamily. As to quaternary structure, monomer. Component of the replication restart primosome which assembles in this order; PriA, DnaD then DnaB. The preferred DNA substrate mimics an arrested DNA replication fork with unreplicated lagging strand. Interacts with DnaD but not DnaB. Interacts with SSB (sbbA) via the latter's 35 residue C-terminal tail which tethers PriA to ssDNA. Colocalizes with DNA pol III subunit gamma/tau (dnaX). May interact with RarA. It depends on Zn(2+) as a cofactor.

It localises to the cytoplasm. The protein resides in the nucleoid. The enzyme catalyses Couples ATP hydrolysis with the unwinding of duplex DNA by translocating in the 3'-5' direction.. It carries out the reaction ATP + H2O = ADP + phosphate + H(+). Functionally, initiates the restart of stalled replication forks, which reloads the replicative helicase on sites other than the origin of replication. Recognizes and binds to abandoned replication forks and remodels them to uncover a helicase loading site. Promotes assembly of the primosome at these replication forks. Serves as the initiating protein for assembly of the replication restart primosome; binding of PriA to an arrested DNA replication fork with unreplicated lagging strand triggers assembly. Sequentially DnaD (possibly as a dimer) and DnaB homotetramers bind. Assembly probably continues by loading of the DnaC replicative helicase aided by helicase loader DnaI. A single-strand (ss)DNA-dependent ATPase with helicase activity. Recognizes and binds the arrested nascent DNA chain at stalled replication forks. Binds forked DNA substrates and makes a larger complex with RarA; RarA has no effect on the helicase function. Binds ssDNA, D-loops and replication fork-like substrates but not double-stranded (ds)DNA; the preferred DNA substrate mimics an arrested DNA replication fork with an unreplicated lagging strand. Recognizes nicked dsDNA. A supershift on ssDNA occurs in the presence of single-stranded binding protein (SSB). Cannot substitute for E.coli PriA. Its function is as follows. Required for replication of plasmids that have a rolling circle mechanism, which produces circular single-stranded (ss)DNA intermediates corresponding to the lagging strand template, which are then converted into double-stranded (ds)DNA; priA is required to activate the conversion of ssDNA into dsDNA. The protein is Replication restart protein PriA of Bacillus subtilis (strain 168).